We begin with the raw amino-acid sequence, 544 residues long: Chaperonin GroEL (544 aa).

ATP-binding positions include 29 to 32 (TLGP), 86 to 90 (DGTTT), G413, 476 to 478 (NAA), and D492.

It belongs to the chaperonin (HSP60) family. Forms a cylinder of 14 subunits composed of two heptameric rings stacked back-to-back. Interacts with the co-chaperonin GroES.

It is found in the cytoplasm. The enzyme catalyses ATP + H2O + a folded polypeptide = ADP + phosphate + an unfolded polypeptide.. Functionally, together with its co-chaperonin GroES, plays an essential role in assisting protein folding. The GroEL-GroES system forms a nano-cage that allows encapsulation of the non-native substrate proteins and provides a physical environment optimized to promote and accelerate protein folding. This chain is Chaperonin GroEL, found in Bacillus cereus (strain G9842).